The following is a 540-amino-acid chain: Putative cysteine ligase BshC (540 aa).

The stretch at 455–491 (GKENLKRLIRVVNSFEEKVKQRHRKNNQVAIQQLQKI) forms a coiled coil.

Belongs to the BshC family.

Its function is as follows. Involved in bacillithiol (BSH) biosynthesis. May catalyze the last step of the pathway, the addition of cysteine to glucosamine malate (GlcN-Mal) to generate BSH. In Desulforamulus reducens (strain ATCC BAA-1160 / DSM 100696 / MI-1) (Desulfotomaculum reducens), this protein is Putative cysteine ligase BshC.